We begin with the raw amino-acid sequence, 81 residues long: Probable small nuclear ribonucleoprotein G (81 aa).

One can recognise a Sm domain in the interval Gly-5–Val-76.

Belongs to the snRNP Sm proteins family.

The protein resides in the nucleus. In terms of biological role, probable common Sm protein, is found in U1 and U2 snRNPs and may be part of the spliceosome. The chain is Probable small nuclear ribonucleoprotein G (C29) from Medicago sativa (Alfalfa).